The primary structure comprises 121 residues: Small ribosomal subunit protein bS16m (121 aa).

This sequence belongs to the bacterial ribosomal protein bS16 family. As to quaternary structure, component of the mitochondrial small ribosomal subunit (mt-SSU). Mature yeast 74S mitochondrial ribosomes consist of a small (37S) and a large (54S) subunit. The 37S small subunit contains a 15S ribosomal RNA (15S mt-rRNA) and 34 different proteins. The 54S large subunit contains a 21S rRNA (21S mt-rRNA) and 46 different proteins.

The protein localises to the mitochondrion. Component of the mitochondrial ribosome (mitoribosome), a dedicated translation machinery responsible for the synthesis of mitochondrial genome-encoded proteins, including at least some of the essential transmembrane subunits of the mitochondrial respiratory chain. The mitoribosomes are attached to the mitochondrial inner membrane and translation products are cotranslationally integrated into the membrane. The protein is Small ribosomal subunit protein bS16m (MRPS16) of Saccharomyces cerevisiae (strain ATCC 204508 / S288c) (Baker's yeast).